Reading from the N-terminus, the 301-residue chain is Ribonuclease Z (301 aa).

Zn(2+) is bound by residues His-63, His-65, Asp-67, His-68, His-141, Asp-204, and His-262. The Proton acceptor role is filled by Asp-67.

It belongs to the RNase Z family. As to quaternary structure, homodimer. Zn(2+) serves as cofactor.

The enzyme catalyses Endonucleolytic cleavage of RNA, removing extra 3' nucleotides from tRNA precursor, generating 3' termini of tRNAs. A 3'-hydroxy group is left at the tRNA terminus and a 5'-phosphoryl group is left at the trailer molecule.. Zinc phosphodiesterase, which displays some tRNA 3'-processing endonuclease activity. Probably involved in tRNA maturation, by removing a 3'-trailer from precursor tRNA. This Streptomyces coelicolor (strain ATCC BAA-471 / A3(2) / M145) protein is Ribonuclease Z.